A 133-amino-acid polypeptide reads, in one-letter code: Profilin-3 (133 aa).

This sequence belongs to the profilin family. As to quaternary structure, occurs in many kinds of cells as a complex with monomeric actin in a 1:1 ratio.

The protein resides in the cytoplasm. The protein localises to the cytoskeleton. Functionally, binds to actin and affects the structure of the cytoskeleton. At high concentrations, profilin prevents the polymerization of actin, whereas it enhances it at low concentrations. By binding to PIP2, it inhibits the formation of IP3 and DG. This chain is Profilin-3 (PRO3), found in Nicotiana tabacum (Common tobacco).